The following is a 363-amino-acid chain: 3-isopropylmalate dehydrogenase (363 aa).

78-91 is an NAD(+) binding site; it reads GPKWENLPPESQPE. Substrate contacts are provided by arginine 99, arginine 109, arginine 138, and aspartate 227. Positions 227, 251, and 255 each coordinate Mg(2+). 285-297 is a binding site for NAD(+); that stretch reads GSAPDIAGKNIAN.

It belongs to the isocitrate and isopropylmalate dehydrogenases family. LeuB type 1 subfamily. In terms of assembly, homodimer. Mg(2+) serves as cofactor. The cofactor is Mn(2+).

It is found in the cytoplasm. The enzyme catalyses (2R,3S)-3-isopropylmalate + NAD(+) = 4-methyl-2-oxopentanoate + CO2 + NADH. Its pathway is amino-acid biosynthesis; L-leucine biosynthesis; L-leucine from 3-methyl-2-oxobutanoate: step 3/4. Catalyzes the oxidation of 3-carboxy-2-hydroxy-4-methylpentanoate (3-isopropylmalate) to 3-carboxy-4-methyl-2-oxopentanoate. The product decarboxylates to 4-methyl-2 oxopentanoate. The chain is 3-isopropylmalate dehydrogenase from Salmonella typhi.